A 506-amino-acid chain; its full sequence is Glycine--tRNA ligase (506 aa).

Positions 99 and 189 each coordinate substrate. ATP is bound by residues 221-223 (RNE), 231-236 (FRVREL), 306-307 (EI), and 365-368 (GVDR). Position 236-240 (236-240 (LEQME)) interacts with substrate. Residue 361-365 (EPSAG) coordinates substrate.

This sequence belongs to the class-II aminoacyl-tRNA synthetase family. In terms of assembly, homodimer.

It is found in the cytoplasm. The catalysed reaction is tRNA(Gly) + glycine + ATP = glycyl-tRNA(Gly) + AMP + diphosphate. Its function is as follows. Catalyzes the attachment of glycine to tRNA(Gly). The sequence is that of Glycine--tRNA ligase from Deinococcus radiodurans (strain ATCC 13939 / DSM 20539 / JCM 16871 / CCUG 27074 / LMG 4051 / NBRC 15346 / NCIMB 9279 / VKM B-1422 / R1).